Here is a 143-residue protein sequence, read N- to C-terminus: Transcription antitermination protein NusB (143 aa).

It belongs to the NusB family.

Its function is as follows. Involved in transcription antitermination. Required for transcription of ribosomal RNA (rRNA) genes. Binds specifically to the boxA antiterminator sequence of the ribosomal RNA (rrn) operons. The chain is Transcription antitermination protein NusB from Desulforapulum autotrophicum (strain ATCC 43914 / DSM 3382 / VKM B-1955 / HRM2) (Desulfobacterium autotrophicum).